The following is a 108-amino-acid chain: UPF0145 protein Patl_2194 (108 aa).

The protein belongs to the UPF0145 family.

This Pseudoalteromonas atlantica (strain T6c / ATCC BAA-1087) protein is UPF0145 protein Patl_2194.